The following is a 175-amino-acid chain: Secretion monitor (175 aa).

Residues 1–38 (MSIINFWRQFGRRYFWSHLLLGMVAAGIGMPSLVSAHA) form the signal peptide.

The protein belongs to the SecM family.

The protein localises to the cytoplasm. Its subcellular location is the cytosol. It is found in the periplasm. Its function is as follows. Regulates secA expression by translational coupling of the secM secA operon. Translational pausing at a specific Pro residue 5 residues before the end of the protein may allow disruption of a mRNA repressor helix that normally suppresses secA translation initiation. The protein is Secretion monitor of Proteus mirabilis (strain HI4320).